Here is a 325-residue protein sequence, read N- to C-terminus: MHQVDPNLTRRKGRLAALAIAAMASASLVTVAVPATANADPEPAPPVPTTAASPPSTAAAPPAPATPVAPPPPAAANTPNAQPGDPNAAPPPADPNAPPPPVIAPNAPQPVRIDNPVGGFSFALPAGWVESDAAHFDYGSALLSKTTGDPPFPGQPPPVANDTRIVLGRLDQKLYASAEATDSKAAARLGSDMGEFYMPYPGTRINQETVSLDANGVSGSASYYEVKFSDPSKPNGQIWTGVIGSPAANAPDAGPPQRWFVVWLGTANNPVDKGAAKALAESIRPLVAPPPAPAPAPAEPAPAPAPAGEVAPTPTTPTPQRTLPA.

An N-terminal signal peptide occupies residues 1-39; the sequence is MHQVDPNLTRRKGRLAALAIAAMASASLVTVAVPATANA. Disordered stretches follow at residues 38–110 and 286–325; these read NADP…APQP and LVAPPPAPAPAPAEPAPAPAPAGEVAPTPTTPTPQRTLPA. O-linked (Man...) threonine glycosylation is found at T49 and T57. Residues 49–60 show a composition bias toward low complexity; sequence TTAASPPSTAAA. A compositionally biased stretch (pro residues) spans 61–74; sequence PPAPATPVAPPPPA. T66 carries an O-linked (Man) threonine glycan. Over residues 75–87 the composition is skewed to low complexity; the sequence is AANTPNAQPGDPN. 3 tandem repeats follow at residues 85-88, 94-97, and 104-107. A 3 X 4 AA approximate repeats of [DA]-P-N-A region spans residues 85 to 107; the sequence is DPNAAPPPADPNAPPPPVIAPNA. Residues 88–103 are compositionally biased toward pro residues; it reads AAPPPADPNAPPPPVI. The segment covering 287-305 has biased composition (pro residues); sequence VAPPPAPAPAPAEPAPAPA. Residues 306–325 show a composition bias toward low complexity; sequence PAGEVAPTPTTPTPQRTLPA. An O-linked (Man...) threonine glycan is attached at T316.

This sequence belongs to the Apa family. In terms of processing, glycosylated, with mannose residues. The secreted protein has from 0 to 9 mannose residues, the majority have 6, 7, or 8 mannose residues (22, 24 and 17% respectively). Deglycosylated molecules had a significantly lower capacity to elicit a DTH reaction in guinea pigs in vivo or to activate specific T lymphocytes in vitro. Pretreating mouse macrophages with mannan decreases binding of M.tuberculosis. The non-glycosylated form stimulates IFN-gamma production however, so glycosylation is not essential. Post-translationally, runs as 45 and 47 kDa protein, the nature of the difference between the 2 forms is not known but is still seen after alpha-mannosidase treatment.

The protein resides in the secreted. Its subcellular location is the cell surface. Its function is as follows. A potent antigen in animals immunized with live bacteria, it induces a strong delayed-type hypersensitivity (DTH) in immunized animals. Elicits a mostly Th1 type of T-cell response in healthy humans; induces IFN-gamma production from CD4(+) and CD8(+) cells. Functions as an adhesin, binds to mouse macrophages via mannose residues. Might interact via host CD209. The polypeptide is Alanine and proline-rich secreted protein Apa (apa) (Mycobacterium tuberculosis (strain ATCC 25618 / H37Rv)).